The sequence spans 240 residues: MAEYLASIFGTEKDKVNCSFYFKIGACRHGDRCSRLHNKPTFSQTIALLNIYRNPQNSSQSADGLRCAVSDVEMQEHYDEFFEEVFTEMEEKYGEVEEMNVCDNLGDHLVGNVYVKFRREEDAEKAVIDLNNRWFNGQPIHAELSPVTDFREACCRQYEMGECTRGGFCNFMHLKPISRELRRELYGRRRKKHRSRSRSRERRSRSRDRGRGGGGGGGGGGGGRERDRRRSRDRERSGRF.

Ala2 carries the N-acetylalanine modification. The C3H1-type 1 zinc-finger motif lies at Glu12–Pro40. Lys39 bears the N6-methyllysine mark. Phosphoserine occurs at positions 61 and 145. In terms of domain architecture, RRM spans Leu65 to Val147. The C3H1-type 2 zinc-finger motif lies at Asp149–Pro176. At Arg165 the chain carries Omega-N-methylarginine. The segment at Arg183–Phe240 is disordered. Over residues Arg188 to Asp208 the composition is skewed to basic residues. Gly residues predominate over residues Gly212–Gly222. The segment covering Gly223–Phe240 has biased composition (basic and acidic residues).

Belongs to the splicing factor SR family. Identified in the spliceosome C complex. Heterodimer with U2AF2. Interacts (via RS domain) with PHF5A (via N-terminus). Interacts with ZRANB2. Interacts with SDE2. Interacts with SF3B1.

The protein localises to the nucleus. The protein resides in the nucleus speckle. In terms of biological role, plays a critical role in both constitutive and enhancer-dependent splicing by mediating protein-protein interactions and protein-RNA interactions required for accurate 3'-splice site selection. Recruits U2 snRNP to the branch point. Directly mediates interactions between U2AF2 and proteins bound to the enhancers and thus may function as a bridge between U2AF2 and the enhancer complex to recruit it to the adjacent intron. The chain is Splicing factor U2AF 35 kDa subunit (U2AF1) from Homo sapiens (Human).